A 334-amino-acid chain; its full sequence is Fructose-1,6-bisphosphatase class 1 (334 aa).

Residues Glu92, Asp114, Leu116, and Asp117 each coordinate Mg(2+). Residues 117-120 (DGSS) and Asn209 each bind substrate. Glu281 contacts Mg(2+).

This sequence belongs to the FBPase class 1 family. In terms of assembly, homotetramer. Mg(2+) is required as a cofactor.

It localises to the cytoplasm. The catalysed reaction is beta-D-fructose 1,6-bisphosphate + H2O = beta-D-fructose 6-phosphate + phosphate. Its pathway is carbohydrate biosynthesis; gluconeogenesis. This Nitrosomonas eutropha (strain DSM 101675 / C91 / Nm57) protein is Fructose-1,6-bisphosphatase class 1.